We begin with the raw amino-acid sequence, 543 residues long: Protein SGE1 (543 aa).

Topologically, residues Met1–Thr8 are cytoplasmic. Residues Leu9–Val29 traverse the membrane as a helical segment. Topologically, residues Thr30–Asp41 are extracellular. The chain crosses the membrane as a helical span at residues Phe42–Leu62. The Cytoplasmic portion of the chain corresponds to Trp63–Ser79. Residues Val80–Ile100 traverse the membrane as a helical segment. Over Ser101–Arg103 the chain is Extracellular. Residues Val104 to Ile124 form a helical membrane-spanning segment. Residues Val125–Gly131 are Cytoplasmic-facing. Residues Ile132 to Gly152 traverse the membrane as a helical segment. At Gly153–Arg162 the chain is on the extracellular side. Residues Trp163 to Asn183 form a helical membrane-spanning segment. The Cytoplasmic segment spans residues Thr184 to Asp227. Residues Met228 to Gly248 traverse the membrane as a helical segment. At Gly249 to Asn255 the chain is on the extracellular side. The chain crosses the membrane as a helical span at residues Ser256–Tyr276. The Cytoplasmic segment spans residues Asp277 to Asn300. Residues Ile301–Tyr321 traverse the membrane as a helical segment. Over Glu322–Thr341 the chain is Extracellular. The chain crosses the membrane as a helical span at residues Leu342–Ala362. Residues Tyr363–Pro373 lie on the Cytoplasmic side of the membrane. A helical transmembrane segment spans residues Ala374 to Gly394. Over Glu395–Ser399 the chain is Extracellular. Residues Ile400–Ser420 form a helical membrane-spanning segment. Residues Ser421–Asn443 are Cytoplasmic-facing. A helical membrane pass occupies residues Ser444–Ala464. Topologically, residues Ser465–Ala508 are extracellular. Residues Ile509–Phe529 traverse the membrane as a helical segment. Over Thr530 to Gln543 the chain is Cytoplasmic.

This sequence belongs to the major facilitator superfamily.

It localises to the membrane. Drug export permease. Multi-copy suppressor of loss-of-function mutation of GAL11. Involved specifically in transcription of GAL4-dependent genes. Can link GAL4 with the basal transcription machinery if GAL11 is missing. Confers resistance to 10-N-nonyl acridine orange (NAO) and in general to cationic dyes. The chain is Protein SGE1 (SGE1) from Saccharomyces cerevisiae (strain ATCC 204508 / S288c) (Baker's yeast).